Reading from the N-terminus, the 156-residue chain is RNA polymerase sigma factor SigS (156 aa).

Residues 29 to 44 (EYYQLLLIKMWQLSQI) carry the Polymerase core binding motif. A DNA-binding region (H-T-H motif) is located at residues 126 to 145 (QYEIADIMSLSTSTIKLIKA).

Belongs to the sigma-70 factor family.

Its function is as follows. Sigma factors are initiation factors that promote the attachment of RNA polymerase to specific initiation sites and are then released. Sigma-S contributes to the protection against external stress, thus playing a role in cellular fitness and survival. In Staphylococcus aureus (strain MRSA252), this protein is RNA polymerase sigma factor SigS (sigS).